The chain runs to 360 residues: Chorismate synthase (360 aa).

R48 contacts NADP(+). FMN is bound by residues 125–127, 242–243, G286, 301–305, and R327; these read RSS, NA, and KPTSS.

Belongs to the chorismate synthase family. Homotetramer. FMNH2 is required as a cofactor.

It carries out the reaction 5-O-(1-carboxyvinyl)-3-phosphoshikimate = chorismate + phosphate. It functions in the pathway metabolic intermediate biosynthesis; chorismate biosynthesis; chorismate from D-erythrose 4-phosphate and phosphoenolpyruvate: step 7/7. Catalyzes the anti-1,4-elimination of the C-3 phosphate and the C-6 proR hydrogen from 5-enolpyruvylshikimate-3-phosphate (EPSP) to yield chorismate, which is the branch point compound that serves as the starting substrate for the three terminal pathways of aromatic amino acid biosynthesis. This reaction introduces a second double bond into the aromatic ring system. This Pelagibacter ubique (strain HTCC1062) protein is Chorismate synthase.